A 489-amino-acid polypeptide reads, in one-letter code: Cytochrome P450 monooxygenase prhB (489 aa).

3 helical membrane passes run 1–21 (MFSF…KVIY), 212–232 (VIFQ…MIFA), and 287–307 (LFIG…AYLL). N-linked (GlcNAc...) asparagine glycosylation is found at Asn-347 and Asn-379. Position 431 (Cys-431) interacts with heme.

This sequence belongs to the cytochrome P450 family. Requires heme as cofactor.

The protein localises to the membrane. Its pathway is secondary metabolite biosynthesis; terpenoid biosynthesis. Cytochrome P450 monooxygenase; part of the gene cluster that mediates the biosynthesis of paraherquonin, a meroterpenoid with a unique, highly congested hexacyclic molecular architecture. The first step of the pathway is the synthesis of 3,5-dimethylorsellinic acid (DMOA) by the polyketide synthase prhL. Synthesis of DMOA is followed by farnesylation by the prenyltransferase prhE, methylesterification by the methyl-transferase prhM, epoxidation of the prenyl chain by the flavin-dependent monooxygenase prhF, and cyclization of the farnesyl moiety by the terpene cyclase prhH, to yield the tetracyclic intermediate, protoaustinoid A. The short chain dehydrogenase prhI then oxidizes the C-3 alcohol group of the terpene cyclase product to transform protoaustinoid A into protoaustinoid B. The FAD-binding monooxygenase prhJ catalyzes the oxidation of protoaustinoid B into preaustinoid A which is further oxidized into preaustinoid A1 by FAD-binding monooxygenase phrK. Finally, prhA leads to berkeleydione via the berkeleyone B intermediate. PrhA is a multifunctional dioxygenase that first desaturates at C5-C6 to form berkeleyone B, followed by rearrangement of the A/B-ring to form the cycloheptadiene moiety in berkeleydione. Berkeleydione serves as the key intermediate for the biosynthesis of paraherquonin as well as many other meroterpenoids. The cytochrome P450 monooxygenases prhB, prhD, and prhN, as well as the isomerase prhC, are probably involved in the late stage of paraherquonin biosynthesis, after the production of berkeleydione. Especially prhC might be a multifunctional enzyme that catalyzes the D-ring expansion via intramolecular methoxy rearrangement, as well as the hydrolysis of the expanded D-ring. The polypeptide is Cytochrome P450 monooxygenase prhB (Penicillium brasilianum).